A 457-amino-acid polypeptide reads, in one-letter code: Multidrug resistance protein MdtK (457 aa).

The next 12 membrane-spanning stretches (helical) occupy residues 11–31, 53–73, 93–113, 127–147, 160–180, 188–208, 243–263, 276–296, 316–336, 357–377, 387–407, and 418–438; these read LLAL…MGVV, IWLP…PVIA, VLAG…GYII, AVNY…FQVM, GMAM…IFIY, LGGV…FFCM, MPVA…ALLV, IALN…AAVT, RTGI…TVVF, LMLL…GSGV, IFFI…YILG, and PAGF…MMMW.

Belongs to the multi antimicrobial extrusion (MATE) (TC 2.A.66.1) family. MdtK subfamily.

The protein localises to the cell inner membrane. In terms of biological role, multidrug efflux pump that functions probably as a Na(+)/drug antiporter. The sequence is that of Multidrug resistance protein MdtK from Cronobacter sakazakii (strain ATCC BAA-894) (Enterobacter sakazakii).